The chain runs to 258 residues: Small ribosomal subunit protein uS2 (258 aa).

This sequence belongs to the universal ribosomal protein uS2 family.

This is Small ribosomal subunit protein uS2 from Leuconostoc mesenteroides subsp. mesenteroides (strain ATCC 8293 / DSM 20343 / BCRC 11652 / CCM 1803 / JCM 6124 / NCDO 523 / NBRC 100496 / NCIMB 8023 / NCTC 12954 / NRRL B-1118 / 37Y).